The primary structure comprises 894 residues: Exocyst complex component 2 (894 aa).

Residues 5–89 (PVVTGLSPKE…GTSTVQFRAY (85 aa)) form the IPT/TIG domain. Residues 398-413 (HTSKDSGAQEKAKNRD) are compositionally biased toward basic and acidic residues. Positions 398–417 (HTSKDSGAQEKAKNRDSSQA) are disordered.

Belongs to the SEC5 family. As to quaternary structure, the exocyst complex is composed of Sec3/Exoc1, Sec5/Exoc2, Sec6/Exoc3, Sec8/Exoc4, Sec10/Exoc5, Sec15/Exoc6, Exo70/Exoc7 and Exo84/Exoc8.

Functionally, component of the exocyst complex involved in the docking of exocytic vesicles with fusion sites on the plasma membrane. The polypeptide is Exocyst complex component 2 (Drosophila melanogaster (Fruit fly)).